The chain runs to 1163 residues: AF4/FMR2 family member 4 (1163 aa).

Over residues 1–19 the composition is skewed to basic and acidic residues; the sequence is MNREDRNVLRMKERERRNQ. Disordered regions lie at residues 1 to 48, 76 to 312, 324 to 904, and 1034 to 1073; these read MNRE…EDKL, AIPK…ASGD, THSW…PRRT, and NSYN…SSGA. Residues 115-128 show a composition bias toward polar residues; that stretch reads PSTSQSQKRSSGLQ. A Phosphoserine modification is found at serine 120. 2 stretches are compositionally biased toward low complexity: residues 129–148 and 177–194; these read SGHS…NSSG and RSSS…NSSH. Over residues 198–217 the composition is skewed to basic and acidic residues; the sequence is HGNDHHSKEHQRSKSPRDPD. Serine 212 bears the Phosphoserine mark. 3 stretches are compositionally biased toward polar residues: residues 227-251, 273-285, and 350-375; these read PFSS…SMLQ, EHYS…NSMT, and KESQ…NGHQ. Residues serine 387, serine 388, serine 389, and serine 392 each carry the phosphoserine modification. The segment covering 403 to 412 has biased composition (polar residues); sequence PRSTPGSNSE. Residues 413-429 are compositionally biased toward basic and acidic residues; it reads PSHHNSEGADNSRDDSS. The segment covering 430–462 has biased composition (low complexity); sequence SHSGSESSSGSDSESESSSSDSEANEPSQSASP. A phosphoserine mark is found at serine 487, serine 490, and serine 491. Composition is skewed to polar residues over residues 488-501, 510-528, and 549-560; these read PASS…SSQG, GTGN…SSAT, and SPAQSDSTTQRR. Serine 549 is subject to Phosphoserine. The span at 568 to 586 shows a compositional bias: basic and acidic residues; the sequence is KKAEKAAAEEPRGGLKIES. A Glycyl lysine isopeptide (Lys-Gly) (interchain with G-Cter in SUMO2) cross-link involves residue lysine 583. A compositionally biased stretch (basic residues) spans 599–612; the sequence is SRHKAATKGSRKPN. Residues 613–627 are compositionally biased toward basic and acidic residues; sequence IKKESKSSPRPTAEK. Serine 671 bears the Phosphoserine mark. Position 674 is a phosphothreonine (threonine 674). Residues serine 680, serine 694, serine 703, and serine 706 each carry the phosphoserine modification. Residue tyrosine 712 is modified to Phosphotyrosine. Composition is skewed to basic and acidic residues over residues 730–761, 769–789, and 799–811; these read PYKE…EKVS, KNED…DKNS, and ESSK…EKDL. A Phosphoserine modification is found at serine 814. Lysine 822 is modified (N6-acetyllysine). Phosphoserine is present on residues serine 836, serine 1043, serine 1055, serine 1058, and serine 1062. Residues 836–862 show a composition bias toward low complexity; that stretch reads SQSSSLKSSSNSNKETSGSSKNSSSTS. Low complexity predominate over residues 1062-1073; it reads SPGNSGNYSSGA.

The protein belongs to the AF4 family. In terms of assembly, component of the super elongation complex (SEC), at least composed of EAF1, EAF2, CDK9, MLLT3/AF9, AFF (AFF1 or AFF4), the P-TEFb complex and ELL (ELL, ELL2 or ELL3). Interacts with ELL3; the interaction is direct. Interacts with ELL2; the interaction is direct and leads to stabilize ELL2 and prevent ELL2 ubiquitination and degradation. In terms of processing, dephosphorylated at Ser-549 by the PNUTS-PP1 complex, promoting RNA polymerase II transcription pause-release. Ubiquitously expressed. Strongly expressed in heart, placenta, skeletal muscle, pancreas and to a lower extent in brain.

It is found in the nucleus. The protein resides in the chromosome. Its function is as follows. Key component of the super elongation complex (SEC), a complex required to increase the catalytic rate of RNA polymerase II transcription by suppressing transient pausing by the polymerase at multiple sites along the DNA. In the SEC complex, AFF4 acts as a central scaffold that recruits other factors through direct interactions with ELL proteins (ELL, ELL2 or ELL3) and the P-TEFb complex. In case of infection by HIV-1 virus, the SEC complex is recruited by the viral Tat protein to stimulate viral gene expression. The sequence is that of AF4/FMR2 family member 4 (AFF4) from Homo sapiens (Human).